Here is a 398-residue protein sequence, read N- to C-terminus: Elongation factor Tu (398 aa).

The region spanning 10-207 (KPHVNIGTIG…TVDEYIPEPE (198 aa)) is the tr-type G domain. Positions 19-26 (GHVDHGKT) are G1. 19-26 (GHVDHGKT) contacts GTP. Residue Thr-26 participates in Mg(2+) binding. The segment at 63–67 (GITIN) is G2. A G3 region spans residues 84–87 (DAPG). GTP contacts are provided by residues 84–88 (DAPGH) and 139–142 (NKVD). The G4 stretch occupies residues 139–142 (NKVD). Residues 177–179 (SAL) form a G5 region.

It belongs to the TRAFAC class translation factor GTPase superfamily. Classic translation factor GTPase family. EF-Tu/EF-1A subfamily. In terms of assembly, monomer.

The protein resides in the cytoplasm. The catalysed reaction is GTP + H2O = GDP + phosphate + H(+). GTP hydrolase that promotes the GTP-dependent binding of aminoacyl-tRNA to the A-site of ribosomes during protein biosynthesis. The chain is Elongation factor Tu from Streptococcus thermophilus (strain CNRZ 1066).